We begin with the raw amino-acid sequence, 799 residues long: Protein phosphatase 1 regulatory subunit 3F (799 aa).

Positions 1–30 (MARTAPVEPPLRHPAPPSPAAGEPRASAEA) are disordered. At 1 to 772 (MARTAPVEPP…LTQTLGVLAG (772 aa)) the chain is on the cytoplasmic side. The segment covering 7 to 19 (VEPPLRHPAPPSP) has biased composition (pro residues). Ser-18 bears the Phosphoserine mark. Low complexity predominate over residues 20–30 (AAGEPRASAEA). Residues 36–39 (RVLF) carry the PP1-binding motif motif. Disordered stretches follow at residues 53-108 (RYRP…PVPA), 201-235 (SPPG…SPDD), 332-353 (RRRP…LAEH), and 417-439 (ATCG…DRAA). Positions 78-97 (ADEEDDGEDGDEGEEEEEAF) are enriched in acidic residues. Residues 127–283 (LERLGRVMVE…NNHGRNYTVL (157 aa)) enclose the CBM21 domain. Residues 334-353 (RPFEEEPRMRSADDNTLAEH) show a composition bias toward basic and acidic residues. Residue Ser-545 is modified to Phosphoserine. 3 disordered regions span residues 566–600 (KDTE…PPEI), 663–688 (SKSP…SWVP), and 722–743 (PHVN…KRSP). The span at 569–579 (EDPDDEGEGED) shows a compositional bias: acidic residues. Residues 585-594 (PSSPEGGSPK) are compositionally biased toward low complexity. 2 positions are modified to phosphoserine: Ser-587 and Ser-592. Over residues 679–688 (PTERESSWVP) the composition is skewed to basic and acidic residues. Residues 773–793 (LVMVPVALNSGVSLLVLVLCL) traverse the membrane as a helical segment. Residues 794 to 799 (SLAWFS) are Extracellular-facing.

As to expression, highly expressed in brain (at protein level).

The protein localises to the membrane. Glycogen-targeting subunit for protein phosphatase 1 (PP1). This chain is Protein phosphatase 1 regulatory subunit 3F (Ppp1r3f), found in Mus musculus (Mouse).